The following is a 369-amino-acid chain: Flagellar P-ring protein (369 aa).

The first 23 residues, 1-23 (MRIASFFTVLLTLLTLNIAPASA), serve as a signal peptide directing secretion.

The protein belongs to the FlgI family. In terms of assembly, the basal body constitutes a major portion of the flagellar organelle and consists of four rings (L,P,S, and M) mounted on a central rod.

It is found in the periplasm. It localises to the bacterial flagellum basal body. In terms of biological role, assembles around the rod to form the L-ring and probably protects the motor/basal body from shearing forces during rotation. This is Flagellar P-ring protein from Pectobacterium carotovorum subsp. carotovorum (strain PC1).